Here is a 484-residue protein sequence, read N- to C-terminus: MDVRQQDVERIVVEVLKKMMSDQPTAAATTVVAASGCDCGDFGLFDRLEDAVQAAEAAQKKISTVAMRDKIIAAIRKAGLENAKAFAEIAHNETGMGRVSDKIAKNILVCERTPGTECLSPMAISGDMGLTLIENAPWGVIASVTPSTNPTATVINNAISMIAGGNSVIFAPHPNAKRASQTAIQVLNKAIIEATGVANLLVAVKEPTIEVAQELFSHPRIKLLVVTGGEAVVAQARKVATMRLIAAGAGNPPVVVDETANIARAARSIYDGASFDNNIICADEKEIIAVDSIADQLKAEMKAIGAVEISLEQADAVARVVLRNYPQVEGGKAPNPNPKWVGRDAALIAKAAGIDVPDSCRLLIVDVKRDINHVFARVEQLMPVIPLLRAANVDEAIEWALILERGLSHTAGMHSRNIDNMDKMARAMNTSLFVKNGPHLAALGAGGEGWTTMTISTPTGEGVTCARSFVRLRRCCVVDNFRIV.

It belongs to the aldehyde dehydrogenase family.

The enzyme catalyses acetaldehyde + NAD(+) + CoA = acetyl-CoA + NADH + H(+). Its pathway is organosulfur degradation; alkanesulfonate degradation. In terms of biological role, involved in an anaerobic respiration pathway that converts the sulfonate taurine (2-aminoethanesulfonate) to ammonia, acetate and sulfide. Catalyzes the oxidation of acetaldehyde to acetyl-CoA in the presence of CoASH and NAD(+). Highly prefers NAD(+) over NADP(+). In Bilophila wadsworthia (strain 3_1_6), this protein is Acetaldehyde dehydrogenase (acetylating).